The chain runs to 367 residues: Ribosome-binding ATPase YchF (367 aa).

The OBG-type G domain maps to 2 to 258 (LSAGIVGLPN…LKLEQRQYFL (257 aa)). Residue 11–16 (NVGKST) coordinates ATP. Residues Ser-15 and Thr-35 each contribute to the Mg(2+) site. The region spanning 281 to 364 (NLWSFFTFGK…KDGDVCNFKF (84 aa)) is the TGS domain.

It belongs to the TRAFAC class OBG-HflX-like GTPase superfamily. OBG GTPase family. YchF/OLA1 subfamily. Mg(2+) serves as cofactor.

Functionally, ATPase that binds to both the 70S ribosome and the 50S ribosomal subunit in a nucleotide-independent manner. The polypeptide is Ribosome-binding ATPase YchF (Mycoplasma genitalium (strain ATCC 33530 / DSM 19775 / NCTC 10195 / G37) (Mycoplasmoides genitalium)).